The following is a 124-amino-acid chain: Fluoride-specific ion channel FluC (124 aa).

The next 4 helical transmembrane spans lie at leucine 2 to isoleucine 22, threonine 35 to phenylalanine 55, threonine 71 to phenylalanine 91, and leucine 100 to leucine 120. Residues glycine 75 and threonine 78 each contribute to the Na(+) site.

It belongs to the fluoride channel Fluc/FEX (TC 1.A.43) family.

It localises to the cell inner membrane. It carries out the reaction fluoride(in) = fluoride(out). Its activity is regulated as follows. Na(+) is not transported, but it plays an essential structural role and its presence is essential for fluoride channel function. Functionally, fluoride-specific ion channel. Important for reducing fluoride concentration in the cell, thus reducing its toxicity. This is Fluoride-specific ion channel FluC from Proteus mirabilis (strain HI4320).